Here is a 276-residue protein sequence, read N- to C-terminus: MHKIFSKNNLIFFVFGAFIFVMIVLQFFVSSENATKVNLSQTFEPISWLHLLGTDDYGRDLFTRIIIGARSTLFVTVLTLIAIVVIGVTLGLFAGYKKGWIERLVLRFIDVGLSIPEFIIVIALASFFQPSLWNLVISITIIKWMNYTRLTRSIVNSEMNKPYIKMAQLFHVPTRTILIRHLTPKIIPAIIVLMVVDFGKIILYISSLSFIGLGSQPPTPEWGAMLQQGRDFISSHPIMLIAPASVIAITILIFNLTGDALRDRLLKQRGEYDESH.

5 helical membrane-spanning segments follow: residues 10–30 (LIFF…FFVS), 73–93 (LFVT…LGLF), 108–128 (FIDV…ASFF), 186–206 (IIPA…LYIS), and 238–258 (IMLI…NLTG). An ABC transmembrane type-1 domain is found at 69–258 (ARSTLFVTVL…ITILIFNLTG (190 aa)).

The protein belongs to the binding-protein-dependent transport system permease family. OppBC subfamily. The complex is composed of two ATP-binding proteins (NikD and NikE), two transmembrane proteins (NikB and NikC) and a solute-binding protein (NikA).

It localises to the cell membrane. In terms of biological role, part of the ABC transporter complex NikABCDE (Opp2) involved in nickel import. Probably responsible for the translocation of the substrate across the membrane. The sequence is that of Nickel import system permease protein NikC from Staphylococcus aureus (strain bovine RF122 / ET3-1).